The following is a 323-amino-acid chain: GMP reductase (323 aa).

The active-site Thioimidate intermediate is the Cys-174. An NADP(+)-binding site is contributed by 203 to 226; sequence IIADGGIRHNGDIAKSVRFGASMV.

It belongs to the IMPDH/GMPR family. GuaC type 2 subfamily.

It carries out the reaction IMP + NH4(+) + NADP(+) = GMP + NADPH + 2 H(+). Catalyzes the irreversible NADPH-dependent deamination of GMP to IMP. It functions in the conversion of nucleobase, nucleoside and nucleotide derivatives of G to A nucleotides, and in maintaining the intracellular balance of A and G nucleotides. This chain is GMP reductase, found in Oenococcus oeni (strain ATCC BAA-331 / PSU-1).